The primary structure comprises 192 residues: FMN-dependent NADH:quinone oxidoreductase 1 (192 aa).

FMN is bound by residues serine 9 and 15-17 (SYS).

The protein belongs to the azoreductase type 1 family. Homodimer. FMN is required as a cofactor.

It carries out the reaction 2 a quinone + NADH + H(+) = 2 a 1,4-benzosemiquinone + NAD(+). The catalysed reaction is N,N-dimethyl-1,4-phenylenediamine + anthranilate + 2 NAD(+) = 2-(4-dimethylaminophenyl)diazenylbenzoate + 2 NADH + 2 H(+). Functionally, quinone reductase that provides resistance to thiol-specific stress caused by electrophilic quinones. In terms of biological role, also exhibits azoreductase activity. Catalyzes the reductive cleavage of the azo bond in aromatic azo compounds to the corresponding amines. The chain is FMN-dependent NADH:quinone oxidoreductase 1 from Colwellia psychrerythraea (strain 34H / ATCC BAA-681) (Vibrio psychroerythus).